The following is a 412-amino-acid chain: NF-kappa-B essential modulator (412 aa).

Residues 1–48 (MNKHPWKNQLSEMVQPSGGPAEDQDMLGEESSLGKPAMLHLPSEQGTP) are disordered. A required for interaction with and ubiquitination by MARCHF2 region spans residues 1–197 (MNKHPWKNQL…REVLQQQHSV (197 aa)). A phosphoserine; by IKKB mark is found at Ser31 and Ser43. Residues 44–111 (EQGTPETLQR…KLVERLSLEK (68 aa)) are interaction with CHUK/IKBKB. Residues 49 to 345 (ETLQRCLEEN…LKVGCHESAR (297 aa)) adopt a coiled-coil conformation. Ser68 bears the Phosphoserine mark. The residue at position 85 (Ser85) is a Phosphoserine; by ATM. Residues Lys111, Lys139, Lys143, Lys226, and Lys246 each participate in a glycyl lysine isopeptide (Lys-Gly) (interchain with G-Cter in ubiquitin) cross-link. The segment at 150 to 250 (LGELQESQSR…YDSHIKSSKG (101 aa)) is interaction with TANK. The ubiquitin-binding (UBAN) stretch occupies residues 242–343 (DSHIKSSKGM…NKLKVGCHES (102 aa)). Residues 246–358 (KSSKGMQLED…MRKRHVETPQ (113 aa)) form a self-association region. The segment at 249 to 412 (KGMQLEDLRQ…LQIHVMECIE (164 aa)) is required for interaction with TNFAIP3. The interval 250–339 (GMQLEDLRQQ…QREFNKLKVG (90 aa)) is linear polyubiquitin-binding, does not bind to 'Lys-63'-linked polyubiquitin. Lys270 participates in a covalent cross-link: Glycyl lysine isopeptide (Lys-Gly) (interchain with G-Cter in SUMO); alternate. A Glycyl lysine isopeptide (Lys-Gly) (interchain with G-Cter in ubiquitin); alternate cross-link involves residue Lys270. Residues Lys276, Lys278, Lys285, and Lys295 each participate in a glycyl lysine isopeptide (Lys-Gly) (interchain with G-Cter in ubiquitin) cross-link. Residue Lys302 forms a Glycyl lysine isopeptide (Lys-Gly) (interchain with G-Cter in SUMO); alternate linkage. A Glycyl lysine isopeptide (Lys-Gly) (interchain with G-Cter in ubiquitin); alternate cross-link involves residue Lys302. Residues Lys314, Lys318, and Lys319 each participate in a glycyl lysine isopeptide (Lys-Gly) (interchain with G-Cter in ubiquitin) cross-link. A leucine-zipper region spans residues 315–336 (LVEKKEYLQEQLEQLQREFNKL). Ser369 carries the post-translational modification Phosphoserine; by IKKB. Residues 375 to 412 (SNQRRSPPEEPPDFCCPKCQYQAPDMDTLQIHVMECIE) are interaction with CYLD. Ser380 carries the post-translational modification Phosphoserine. The CCHC NOA-type zinc-finger motif lies at 382-412 (PEEPPDFCCPKCQYQAPDMDTLQIHVMECIE). Cys390 provides a ligand contact to Zn(2+). A Glycyl lysine isopeptide (Lys-Gly) (interchain with G-Cter in ubiquitin) cross-link involves residue Lys392. Zn(2+) is bound by residues Cys393, His406, and Cys410.

Homodimer; disulfide-linked. Component of the I-kappa-B-kinase (IKK) core complex consisting of CHUK, IKBKB and IKBKG; probably four alpha/CHUK-beta/IKBKB dimers are associated with four gamma/IKBKG subunits. The IKK core complex seems to associate with regulatory or adapter proteins to form a IKK-signalosome holo-complex. The IKK complex associates with TERF2IP/RAP1, leading to promote IKK-mediated phosphorylation of RELA/p65. Part of a complex composed of NCOA2, NCOA3, CHUK/IKKA, IKBKB, IKBKG and CREBBP. Interacts with COPS3, CYLD, NALP2, TRPC4AP and PIDD1. Interacts with ATM; the complex is exported from the nucleus. Interacts with TRAF6. Interacts with IKBKE. Interacts with TANK; the interaction is enhanced by IKBKE and TBK1. Part of a ternary complex consisting of TANK, IKBKB and IKBKG. Interacts with ZFAND5. Interacts with RIPK2. Interacts with TNIP1 and TNFAIP3; TNIP1 facilitates the TNFAIP3-mediated de-ubiquitination of IKBKG. Interacts with TNFAIP3; the interaction is induced by TNF stimulation and by polyubiquitin. Binds (via UBAN region) polyubiquitin; binds both 'Lys-63'-linked and linear polyubiquitin, with higher affinity for linear ubiquitin. Interacts with NLRP10. Interacts with TANK; this interaction increases in response to DNA damage. Interacts with USP10; this interaction increases in response to DNA damage. Interacts with ZC3H12A; this interaction increases in response to DNA damage. Interacts with IFIT5; the interaction synergizes the recruitment of IKK to MAP3K7 and enhances IKK phosphorylation. Interacts with TRIM29; this interaction induces IKBKG/NEMO ubiquitination and proteolytic degradation. Interacts with TRIM13; this interaction leads to IKBKG/NEMO ubiquitination. Interacts with ARFIP2. Interacts with RIPK1. Interacts with (ubiquitinated) BCL10; interaction with polyubiquitinated BCL10 via both 'Lys-63'-linked and linear ubiquitin is required for TCR-induced NF-kappa-B activation. Interacts with MARCHF2; during the late stages of macrophage viral and bacterial infection; the interaction leads to ubiquitination and degradation of IKBKG/NEMO. Post-translationally, phosphorylation at Ser-68 attenuates aminoterminal homodimerization. In terms of processing, polyubiquitinated on Lys-278 via 'Lys-63'-linked ubiquitin; the ubiquitination is mediated downstream of NOD2 and RIPK2 and probably plays a role in signaling by facilitating interactions with ubiquitin domain-containing proteins and activates the NF-kappa-B pathway. Polyubiquitinated on Lys-278 and Lys-302 through 'Lys-63'-linked ubiquitin; the ubiquitination is mediated by BCL10, MALT1 and TRAF6 and probably plays a role in signaling by facilitating interactions with ubiquitin domain-containing proteins and activates the NF-kappa-B pathway. Monoubiquitinated on Lys-270 and Lys-302; promotes nuclear export. Polyubiquitinated through 'Lys-27' by TRIM23; involved in antiviral innate and inflammatory responses. Linear polyubiquitinated on Lys-111, Lys-143, Lys-226, Lys-246, Lys-270, Lys-278, Lys-285, Lys-295, Lys-302 and Lys-319; the head-to-tail polyubiquitination is mediated by the LUBAC complex and plays a key role in NF-kappa-B activation. Deubiquitinated by USP10 in a TANK-dependent and -independent manner, leading to the negative regulation of NF-kappa-B signaling upon DNA damage. Ubiquitinated at Lys-319 by MARCHF2 following bacterial and viral infection which leads to its degradation. Polyubiquitinated via 'Lys-29'-linked ubiquitin; leading to lysosomal degradation. Sumoylated on Lys-270 and Lys-302 with SUMO1; the modification results in phosphorylation of Ser-85 by ATM leading to a replacement of the sumoylation by mono-ubiquitination on these residues. Post-translationally, neddylated by TRIM40, resulting in stabilization of NFKBIA and down-regulation of NF-kappa-B activity.

It is found in the cytoplasm. Its subcellular location is the nucleus. Its function is as follows. Regulatory subunit of the IKK core complex which phosphorylates inhibitors of NF-kappa-B thus leading to the dissociation of the inhibitor/NF-kappa-B complex and ultimately the degradation of the inhibitor. Its binding to scaffolding polyubiquitin plays a key role in IKK activation by multiple signaling receptor pathways. Can recognize and bind both 'Lys-63'-linked and linear polyubiquitin upon cell stimulation, with a much highr affinity for linear polyubiquitin. Could be implicated in NF-kappa-B-mediated protection from cytokine toxicity. Essential for viral activation of IRF3. Involved in TLR3- and IFIH1-mediated antiviral innate response; this function requires 'Lys-27'-linked polyubiquitination. The polypeptide is NF-kappa-B essential modulator (Ikbkg) (Mus musculus (Mouse)).